The primary structure comprises 221 residues: GTP cyclohydrolase III (221 aa).

Belongs to the archaeal-type GTP cyclohydrolase family.

The catalysed reaction is GTP + 3 H2O = 2-amino-5-formylamino-6-(5-phospho-D-ribosylamino)pyrimidin-4(3H)-one + 2 phosphate + 2 H(+). In terms of biological role, catalyzes the formation of 2-amino-5-formylamino-6-ribofuranosylamino-4(3H)-pyrimidinone ribonucleotide monophosphate and inorganic phosphate from GTP. Also has an independent pyrophosphate phosphohydrolase activity. This Pyrobaculum aerophilum (strain ATCC 51768 / DSM 7523 / JCM 9630 / CIP 104966 / NBRC 100827 / IM2) protein is GTP cyclohydrolase III.